Consider the following 88-residue polypeptide: uncharacterized protein (88 aa).

In terms of tissue distribution, expressed in a wide variety of tissues.

This is an uncharacterized protein from Homo sapiens (Human).